Reading from the N-terminus, the 132-residue chain is UPF0299 membrane protein YohJ (132 aa).

4 helical membrane passes run 7 to 27, 31 to 51, 63 to 83, and 93 to 113; these read IIWQ…AGIF, LLPI…VLLA, GCYV…VGVM, and FGPV…VVSW.

The protein belongs to the UPF0299 family.

The protein localises to the cell inner membrane. In Salmonella agona (strain SL483), this protein is UPF0299 membrane protein YohJ.